Reading from the N-terminus, the 557-residue chain is UvrABC system protein C (557 aa).

In terms of domain architecture, GIY-YIG spans 14-89 (EEPGVYIFKN…IKKYRPKYNV (76 aa)). In terms of domain architecture, UVR spans 194–229 (EEVFDYLKEKMETHSKMLDFENAAKYRDLLLNLSNV).

It belongs to the UvrC family. Interacts with UvrB in an incision complex.

Its subcellular location is the cytoplasm. In terms of biological role, the UvrABC repair system catalyzes the recognition and processing of DNA lesions. UvrC both incises the 5' and 3' sides of the lesion. The N-terminal half is responsible for the 3' incision and the C-terminal half is responsible for the 5' incision. The chain is UvrABC system protein C from Thermotoga maritima (strain ATCC 43589 / DSM 3109 / JCM 10099 / NBRC 100826 / MSB8).